The primary structure comprises 562 residues: MLFRRFLNLTTKTPHLQTFRARHYFRNMSCPELIPPPTVRGMTVLDKGAFDKRISAPRLIVPRQLNFQQICSSVKKLLLKMECFKPVVSGEYKITLHPSAVKTWEDLKEIGLEDKGLTEENLVWEQMKLGYDNWRYDEILKAVLPEDKEALSAFSKVGHIVHLNLKEHLLPYKNLIGTVIKDKVVGCRAVVNKLVTIDNTYRNFQMELLCGEEDYQVSLKENGCIFEFDFSKVYWNSRLSTEHGRVVEMLKKGDVLLDVYAGVGPFSIPAAKKGYSVLANDLNPDSYKALVHNCAKNKVQGRITCFNKNGIDFIKEEIKQFIISKNQDDTFTGTIHITMNLPALAVEHLENYVGLLKDEQIELKHFPLVHVYCFAKGVEDNKLLARGLVEKNMGIPLGNNLKEIAFVRNVAPNKDMMRVSFYLTRQILCHNDIQLKRPTSETSHQDAKRKCNVLRKIATMGKRNIKNRNQQKQTAKKVKNVFAVNQSKKGNVKKAKEVTSKLKKINVQDKREKADKKFQDLHAHIVAKKPEKKPLPAKPASKKNKNQANTKQVEAGLDKMQM.

The N-terminal 41 residues, Met1 to Gly41, are a transit peptide targeting the mitochondrion. Residues His243, Asp281–Leu282, and Asn340 each bind S-adenosyl-L-methionine. Positions Ala523–Pro534 are enriched in basic and acidic residues. The segment at Ala523–Met562 is disordered.

This sequence belongs to the class I-like SAM-binding methyltransferase superfamily. TRM5/TYW2 family. As to quaternary structure, monomer.

The protein resides in the mitochondrion matrix. Its subcellular location is the nucleus. It localises to the cytoplasm. The enzyme catalyses guanosine(37) in tRNA + S-adenosyl-L-methionine = N(1)-methylguanosine(37) in tRNA + S-adenosyl-L-homocysteine + H(+). Specifically methylates the N1 position of guanosine-37 in various cytoplasmic and mitochondrial tRNAs. Methylation is not dependent on the nature of the nucleoside 5' of the target nucleoside. This is the first step in the biosynthesis of wybutosine (yW), a modified base adjacent to the anticodon of tRNAs and required for accurate decoding. The sequence is that of tRNA (guanine(37)-N(1))-methyltransferase from Aedes aegypti (Yellowfever mosquito).